A 204-amino-acid polypeptide reads, in one-letter code: FMN-dependent NADH:quinone oxidoreductase (204 aa).

FMN is bound by residues S10, 16 to 18 (SIS), and 96 to 99 (MYNF).

It belongs to the azoreductase type 1 family. In terms of assembly, homodimer. It depends on FMN as a cofactor.

The catalysed reaction is 2 a quinone + NADH + H(+) = 2 a 1,4-benzosemiquinone + NAD(+). It carries out the reaction N,N-dimethyl-1,4-phenylenediamine + anthranilate + 2 NAD(+) = 2-(4-dimethylaminophenyl)diazenylbenzoate + 2 NADH + 2 H(+). Functionally, quinone reductase that provides resistance to thiol-specific stress caused by electrophilic quinones. Also exhibits azoreductase activity. Catalyzes the reductive cleavage of the azo bond in aromatic azo compounds to the corresponding amines. The sequence is that of FMN-dependent NADH:quinone oxidoreductase from Herminiimonas arsenicoxydans.